Consider the following 250-residue polypeptide: 1-(5-phosphoribosyl)-5-[(5-phosphoribosylamino)methylideneamino] imidazole-4-carboxamide isomerase (250 aa).

The active-site Proton acceptor is the aspartate 8. Aspartate 129 functions as the Proton donor in the catalytic mechanism.

It belongs to the HisA/HisF family.

The protein resides in the cytoplasm. The enzyme catalyses 1-(5-phospho-beta-D-ribosyl)-5-[(5-phospho-beta-D-ribosylamino)methylideneamino]imidazole-4-carboxamide = 5-[(5-phospho-1-deoxy-D-ribulos-1-ylimino)methylamino]-1-(5-phospho-beta-D-ribosyl)imidazole-4-carboxamide. It participates in amino-acid biosynthesis; L-histidine biosynthesis; L-histidine from 5-phospho-alpha-D-ribose 1-diphosphate: step 4/9. The chain is 1-(5-phosphoribosyl)-5-[(5-phosphoribosylamino)methylideneamino] imidazole-4-carboxamide isomerase from Desulfovibrio desulfuricans (strain ATCC 27774 / DSM 6949 / MB).